We begin with the raw amino-acid sequence, 254 residues long: 3-dehydroquinate dehydratase (254 aa).

3-dehydroquinate is bound by residues 47 to 49 (EFR) and arginine 83. The active-site Proton donor/acceptor is histidine 144. Residue lysine 171 is the Schiff-base intermediate with substrate of the active site. Arginine 213, serine 232, and glutamine 236 together coordinate 3-dehydroquinate.

It belongs to the type-I 3-dehydroquinase family. In terms of assembly, homodimer.

It carries out the reaction 3-dehydroquinate = 3-dehydroshikimate + H2O. It participates in metabolic intermediate biosynthesis; chorismate biosynthesis; chorismate from D-erythrose 4-phosphate and phosphoenolpyruvate: step 3/7. Functionally, involved in the third step of the chorismate pathway, which leads to the biosynthesis of aromatic amino acids. Catalyzes the cis-dehydration of 3-dehydroquinate (DHQ) and introduces the first double bond of the aromatic ring to yield 3-dehydroshikimate. In Neisseria meningitidis serogroup B (strain ATCC BAA-335 / MC58), this protein is 3-dehydroquinate dehydratase.